A 247-amino-acid polypeptide reads, in one-letter code: NAD(P)H-quinone oxidoreductase subunit K (247 aa).

Residues Cys63, Cys64, Cys128, and Cys159 each contribute to the [4Fe-4S] cluster site.

Belongs to the complex I 20 kDa subunit family. In terms of assembly, NDH-1 can be composed of about 15 different subunits; different subcomplexes with different compositions have been identified which probably have different functions. [4Fe-4S] cluster serves as cofactor.

The protein localises to the cellular thylakoid membrane. It carries out the reaction a plastoquinone + NADH + (n+1) H(+)(in) = a plastoquinol + NAD(+) + n H(+)(out). It catalyses the reaction a plastoquinone + NADPH + (n+1) H(+)(in) = a plastoquinol + NADP(+) + n H(+)(out). In terms of biological role, NDH-1 shuttles electrons from an unknown electron donor, via FMN and iron-sulfur (Fe-S) centers, to quinones in the respiratory and/or the photosynthetic chain. The immediate electron acceptor for the enzyme in this species is believed to be plastoquinone. Couples the redox reaction to proton translocation, and thus conserves the redox energy in a proton gradient. Cyanobacterial NDH-1 also plays a role in inorganic carbon-concentration. This chain is NAD(P)H-quinone oxidoreductase subunit K, found in Gloeothece citriformis (strain PCC 7424) (Cyanothece sp. (strain PCC 7424)).